Here is a 453-residue protein sequence, read N- to C-terminus: Sialic acid-binding Ig-like lectin 6 (453 aa).

Residues M1–A26 form the signal peptide. At Q27–V347 the chain is on the extracellular side. The Ig-like V-type domain occupies E28 to L123. Cystine bridges form between C46–C172, C51–C104, and C166–C215. N-linked (GlcNAc...) asparagine glycosylation is present at N103. N-acetylneuraminate is bound at residue R122. In terms of domain architecture, Ig-like C2-type 1 spans P148–Q231. N-linked (GlcNAc...) asparagine glycans are attached at residues N149 and N163. An N-linked (GlcNAc...) asparagine glycan is attached at N233. Positions P238–S333 constitute an Ig-like C2-type 2 domain. The cysteines at positions 274 and 319 are disulfide-linked. A helical membrane pass occupies residues L348 to F368. Over R369–K453 the chain is Cytoplasmic. Positions L424–L429 match the ITIM motif motif. The short motif at T444–I449 is the SLAM-like motif element.

It belongs to the immunoglobulin superfamily. SIGLEC (sialic acid binding Ig-like lectin) family. As to quaternary structure, interacts with LEP. As to expression, expressed at high levels in placenta (cyto- and syncytiotrophoblastic cells) and at lower levels in spleen, peripheral blood leukocytes (predominantly B-cells) and small intestine.

It localises to the cell membrane. The protein localises to the secreted. In terms of biological role, putative adhesion molecule that mediates sialic-acid dependent binding to cells. Binds to alpha-2,6-linked sialic acid. The sialic acid recognition site may be masked by cis interactions with sialic acids on the same cell surface. The chain is Sialic acid-binding Ig-like lectin 6 (SIGLEC6) from Homo sapiens (Human).